The sequence spans 1038 residues: Translation initiation factor IF-2 (1038 aa).

The tract at residues 48–426 is disordered; it reads DALQGPGGNA…RQRRQEYEAM (379 aa). A compositionally biased stretch (low complexity) spans 58-87; it reads GKSAAKPGAPRKAAPAKPAAPSPAAAARPA. A compositionally biased stretch (pro residues) spans 88–99; it reads APKPGAPAPKPA. Positions 100–114 are enriched in low complexity; that stretch reads EAPSSTPAAPSAPSA. Residues 115 to 125 show a composition bias toward pro residues; sequence GPRPGPKPAPK. Over residues 126-141 the composition is skewed to low complexity; that stretch reads AAPVTPVPAAEFSAPA. Pro residues predominate over residues 142-153; the sequence is PAQPAAPQPQAP. The span at 177–199 shows a compositional bias: basic and acidic residues; sequence DGGRDGGQRDGGRGGERGGDRPA. The span at 200–219 shows a compositional bias: low complexity; the sequence is RPAGQGAPRPGGARPAGPRP. The segment covering 261 to 277 has biased composition (gly residues); it reads SGPGGAPRPQGGQGQGG. Residues 299–315 show a composition bias toward low complexity; the sequence is GNRPNPGMMPQRPAAGP. Residues 319–406 show a composition bias toward gly residues; sequence PGGGGRGPGG…GTQGAFGRPG (88 aa). The segment covering 410-419 has biased composition (basic residues); the sequence is RRGRKSKRQR. The region spanning 531–703 is the tr-type G domain; it reads SRPPVVTVMG…VVLTADASLD (173 aa). A G1 region spans residues 540–547; sequence GHVDHGKT. 540–547 serves as a coordination point for GTP; that stretch reads GHVDHGKT. The segment at 565–569 is G2; the sequence is GITQH. Residues 590 to 593 are G3; that stretch reads DTPG. GTP contacts are provided by residues 590–594 and 644–647; these read DTPGH and NKID. The G4 stretch occupies residues 644–647; it reads NKID. The segment at 680–682 is G5; the sequence is SAK.

The protein belongs to the TRAFAC class translation factor GTPase superfamily. Classic translation factor GTPase family. IF-2 subfamily.

It localises to the cytoplasm. Its function is as follows. One of the essential components for the initiation of protein synthesis. Protects formylmethionyl-tRNA from spontaneous hydrolysis and promotes its binding to the 30S ribosomal subunits. Also involved in the hydrolysis of GTP during the formation of the 70S ribosomal complex. The chain is Translation initiation factor IF-2 from Streptomyces griseus subsp. griseus (strain JCM 4626 / CBS 651.72 / NBRC 13350 / KCC S-0626 / ISP 5235).